We begin with the raw amino-acid sequence, 242 residues long: tRNA (guanine-N(1)-)-methyltransferase (242 aa).

Residues glycine 112 and 131–136 (LGDFIL) each bind S-adenosyl-L-methionine.

This sequence belongs to the RNA methyltransferase TrmD family. Homodimer.

It localises to the cytoplasm. The enzyme catalyses guanosine(37) in tRNA + S-adenosyl-L-methionine = N(1)-methylguanosine(37) in tRNA + S-adenosyl-L-homocysteine + H(+). Functionally, specifically methylates guanosine-37 in various tRNAs. The protein is tRNA (guanine-N(1)-)-methyltransferase of Crocosphaera subtropica (strain ATCC 51142 / BH68) (Cyanothece sp. (strain ATCC 51142)).